Here is a 319-residue protein sequence, read N- to C-terminus: Tetrahydromethanopterin S-methyltransferase subunit H (319 aa).

It belongs to the MtrH family. As to quaternary structure, the complex is composed of 8 subunits; MtrA, MtrB, MtrC, MtrD, MtrE, MtrF, MtrG and MtrH.

It catalyses the reaction 5-methyl-5,6,7,8-tetrahydromethanopterin + coenzyme M + 2 Na(+)(in) = 5,6,7,8-tetrahydromethanopterin + methyl-coenzyme M + 2 Na(+)(out). It participates in one-carbon metabolism; methanogenesis from CO(2); methyl-coenzyme M from 5,10-methylene-5,6,7,8-tetrahydromethanopterin: step 2/2. Part of a complex that catalyzes the formation of methyl-coenzyme M and tetrahydromethanopterin from coenzyme M and methyl-tetrahydromethanopterin. This is an energy-conserving, sodium-ion translocating step. MtrH catalyzes the transfer of the methyl group from methyl-tetrahydromethanopterin to the corrinoid prosthetic group of MtrA. This chain is Tetrahydromethanopterin S-methyltransferase subunit H, found in Methanococcus maripaludis (strain C5 / ATCC BAA-1333).